Here is a 547-residue protein sequence, read N- to C-terminus: Chaperonin GroEL (547 aa).

ATP is bound by residues 30-33 (TLGP), Lys-51, 87-91 (DGTTT), Gly-415, 479-481 (NAA), and Asp-495.

The protein belongs to the chaperonin (HSP60) family. Forms a cylinder of 14 subunits composed of two heptameric rings stacked back-to-back. Interacts with the co-chaperonin GroES.

Its subcellular location is the cytoplasm. It carries out the reaction ATP + H2O + a folded polypeptide = ADP + phosphate + an unfolded polypeptide.. Functionally, together with its co-chaperonin GroES, plays an essential role in assisting protein folding. The GroEL-GroES system forms a nano-cage that allows encapsulation of the non-native substrate proteins and provides a physical environment optimized to promote and accelerate protein folding. The sequence is that of Chaperonin GroEL from Nitratidesulfovibrio vulgaris (strain ATCC 29579 / DSM 644 / CCUG 34227 / NCIMB 8303 / VKM B-1760 / Hildenborough) (Desulfovibrio vulgaris).